The following is a 146-amino-acid chain: Ribosome maturation factor RimP (146 aa).

The protein belongs to the RimP family.

Its subcellular location is the cytoplasm. In terms of biological role, required for maturation of 30S ribosomal subunits. The polypeptide is Ribosome maturation factor RimP (Helicobacter pylori (strain Shi470)).